Consider the following 420-residue polypeptide: Glycogen synthase kinase-3 beta (420 aa).

Polar residues predominate over residues 1-22; the sequence is MSGRPRTTSFAESCKPVQQPSA. The tract at residues 1 to 53 is disordered; the sequence is MSGRPRTTSFAESCKPVQQPSAFGSMKVSRDKDGSKVTTVVATPGQGPDRPQE. A Phosphoserine; by PKB/AKT1, RPS6KA3 and SGK3 modification is found at Ser9. Cys14 carries the S-palmitoyl cysteine lipid modification. Residues 56-340 enclose the Protein kinase domain; that stretch reads YTDTKVIGNG…PLEACAHSFF (285 aa). ATP contacts are provided by residues 62–70 and Lys85; that span reads IGNGSFGVV. Asp181 acts as the Proton acceptor in catalysis. At Tyr216 the chain carries Phosphotyrosine. The tract at residues 385–420 is disordered; the sequence is QAAASPPANATAASDTNAGDRGQTNNAASASASNST. Composition is skewed to low complexity over residues 386 to 401 and 409 to 420; these read AAASPPANATAASDTN and NNAASASASNST. At Ser389 the chain carries Phosphoserine.

It belongs to the protein kinase superfamily. CMGC Ser/Thr protein kinase family. GSK-3 subfamily. As to quaternary structure, monomer. Interacts with DAB2IP (via C2 domain); the interaction stimulates GSK3B kinase activation. Interacts (via C2 domain) with PPP2CA. Interacts with CABYR, MMP2, MUC1, NIN and PRUNE1. Interacts with AXIN1; the interaction mediates hyperphosphorylation of CTNNB1 leading to its ubiquitination and destruction. Interacts with and phosphorylates SNAI1. Interacts with DNM1L (via a C-terminal domain). Interacts with ARRB2. Interacts with DISC1. Found in a complex composed of MACF1, APC, AXIN1, CTNNB1 and GSK3B. Interacts with SGK3. Interacts with the CLOCK-BMAL1 heterodimer. Interacts with ZBED3. Interacts with the BMAL1. The complex composed, at least, of APC, CTNNB1 and GSK3B interacts with JPT1; the interaction requires the inactive form of GSK3B (phosphorylated at 'Ser-9'). Forms a complex composed of PRKAR2A or PRKAR2B, GSK3B and GSKIP through GSKIP interaction; facilitates PKA-induced phosphorylation and regulates GSK3B activity. Interacts with GSKIP. Interacts with GID8. Interacts with PIWIL2. Interacts with LMBR1L. Interacts with DDX3X. Interacts with BIRC2. Interacts with TNFRSF10B; TNFRSF10B stimulation inhibits GSK3B kinase activity. Found in a complex with SLC39A6, SLC39A10 and with GSK3B that controls NCAM1 phosphorylation. Interacts with PKP3 (via ARM repeats); the interaction may be involved in PKP3 protein degradation. Post-translationally, phosphorylated by AKT1 and ILK1. Upon insulin-mediated signaling, the activated PKB/AKT1 protein kinase phosphorylates and deactivates GSK3B, resulting in the dephosphorylation and activation of GYS1. Activated by phosphorylation at Tyr-216. Phosphorylation of Ser-9 in the hippocampus peaks at CT0, whereas in the liver it peaks at CT12. Inactivated by phosphorylation at Ser-9. Phosphorylated in a circadian manner in the hippocampus. In terms of processing, mono-ADP-ribosylation by PARP10 negatively regulates kinase activity. Palmitoylated. Palmitoylation by ZDHHC4 prevents AKT1-mediated phosphorylation. In terms of tissue distribution, expressed in the liver (at protein level).

The protein resides in the cytoplasm. It is found in the nucleus. Its subcellular location is the cell membrane. The enzyme catalyses L-seryl-[tau protein] + ATP = O-phospho-L-seryl-[tau protein] + ADP + H(+). It catalyses the reaction L-threonyl-[tau protein] + ATP = O-phospho-L-threonyl-[tau protein] + ADP + H(+). It carries out the reaction L-seryl-[protein] + ATP = O-phospho-L-seryl-[protein] + ADP + H(+). The catalysed reaction is L-threonyl-[protein] + ATP = O-phospho-L-threonyl-[protein] + ADP + H(+). With respect to regulation, activated by phosphorylation at Tyr-216. In response to insulin, inhibited by phosphorylation at Ser-9 by PKB/AKT1 and RPS6KA3; phosphorylation at this site causes a conformational change, preventing access of substrates to the active site. Inhibited by IL22 treatment which also triggers phosphorylation at Ser-9, promoting inactivation. Inhibited by lithium. Constitutively active protein kinase that acts as a negative regulator in the hormonal control of glucose homeostasis, Wnt signaling and regulation of transcription factors and microtubules, by phosphorylating and inactivating glycogen synthase (GYS1 or GYS2), EIF2B, CTNNB1/beta-catenin, APC, AXIN1, DPYSL2/CRMP2, JUN, NFATC1/NFATC, MAPT/TAU and MACF1. Requires primed phosphorylation of the majority of its substrates. In skeletal muscle, contributes to insulin regulation of glycogen synthesis by phosphorylating and inhibiting GYS1 activity and hence glycogen synthesis. May also mediate the development of insulin resistance by regulating activation of transcription factors. Regulates protein synthesis by controlling the activity of initiation factor 2B (EIF2BE/EIF2B5) in the same manner as glycogen synthase. In Wnt signaling, GSK3B forms a multimeric complex with APC, AXIN1 and CTNNB1/beta-catenin and phosphorylates the N-terminus of CTNNB1 leading to its degradation mediated by ubiquitin/proteasomes. Phosphorylates JUN at sites proximal to its DNA-binding domain, thereby reducing its affinity for DNA. Phosphorylates NFATC1/NFATC on conserved serine residues promoting NFATC1/NFATC nuclear export, shutting off NFATC1/NFATC gene regulation, and thereby opposing the action of calcineurin. Phosphorylates MAPT/TAU on 'Thr-548', decreasing significantly MAPT/TAU ability to bind and stabilize microtubules. MAPT/TAU is the principal component of neurofibrillary tangles in Alzheimer disease. Plays an important role in ERBB2-dependent stabilization of microtubules at the cell cortex. Phosphorylates MACF1, inhibiting its binding to microtubules which is critical for its role in bulge stem cell migration and skin wound repair. Probably regulates NF-kappa-B (NFKB1) at the transcriptional level and is required for the NF-kappa-B-mediated anti-apoptotic response to TNF-alpha (TNF/TNFA). Negatively regulates replication in pancreatic beta-cells, resulting in apoptosis, loss of beta-cells and diabetes. Through phosphorylation of the anti-apoptotic protein MCL1, may control cell apoptosis in response to growth factors deprivation. Phosphorylates MUC1 in breast cancer cells, decreasing the interaction of MUC1 with CTNNB1/beta-catenin. Is necessary for the establishment of neuronal polarity and axon outgrowth. Phosphorylates MARK2, leading to inhibition of its activity. Phosphorylates SIK1 at 'Thr-182', leading to sustainment of its activity. Phosphorylates ZC3HAV1 which enhances its antiviral activity. Phosphorylates SNAI1, leading to its ubiquitination and proteasomal degradation. Phosphorylates SFPQ at 'Thr-687' upon T-cell activation. Phosphorylates NR1D1 st 'Ser-55' and 'Ser-59' and stabilizes it by protecting it from proteasomal degradation. Regulates the circadian clock via phosphorylation of the major clock components including BMAL1, CLOCK and PER2. Phosphorylates CLOCK AT 'Ser-427' and targets it for proteasomal degradation. Phosphorylates BMAL1 at 'Ser-17' and 'Ser-21' and primes it for ubiquitination and proteasomal degradation. Phosphorylates FBXL2 at 'Thr-404' and primes it for ubiquitination by the SCF(FBXO3) complex and proteasomal degradation. Phosphorylates OGT at 'Ser-3' or 'Ser-4' which positively regulates its activity. Phosphorylates MYCN in neuroblastoma cells which may promote its degradation. Regulates the circadian rhythmicity of hippocampal long-term potentiation and BMAL1 and PER2 expression. Acts as a regulator of autophagy by mediating phosphorylation of KAT5/TIP60 under starvation conditions, activating KAT5/TIP60 acetyltransferase activity and promoting acetylation of key autophagy regulators, such as ULK1 and RUBCNL/Pacer. Negatively regulates extrinsic apoptotic signaling pathway via death domain receptors. Promotes the formation of an anti-apoptotic complex, made of DDX3X, BRIC2 and GSK3B, at death receptors, including TNFRSF10B. The anti-apoptotic function is most effective with weak apoptotic signals and can be overcome by stronger stimulation. Phosphorylates E2F1, promoting the interaction between E2F1 and USP11, stabilizing E2F1 and promoting its activity. Phosphorylates mTORC2 complex component RICTOR at 'Ser-1235' in response to endoplasmic stress, inhibiting mTORC2. Phosphorylates FXR1, promoting FXR1 ubiquitination by the SCF(FBXO4) complex and FXR1 degradation by the proteasome. Phosphorylates interleukin-22 receptor subunit IL22RA1, preventing its proteasomal degradation. The sequence is that of Glycogen synthase kinase-3 beta from Mus musculus (Mouse).